We begin with the raw amino-acid sequence, 366 residues long: Zinc transporter ZIP13 (366 aa).

Residues 1–5 (MTKQK) are Lumenal-facing. Residues 6 to 26 (LLLNGTFSLILIVACEAQQLP) traverse the membrane as a helical segment. At 27–57 (RSHAASSSGPLCEKEAESWGNLLSSERLDAW) the chain is on the cytoplasmic side. Residues 58–78 (ICSLIGSFMVGLSGIFPLLVI) form a helical membrane-spanning segment. The Lumenal portion of the chain corresponds to 79–97 (PFETGAALRSEAGSRRLKQ). A helical transmembrane segment spans residues 98 to 118 (LLSFAIGGLLGNVFLHLLPEA). The Cytoplasmic portion of the chain corresponds to 119–137 (WAYTCSAAAGEGQSFQQQK). Residues 138-158 (LLGLWVIIGFLTFLALEKIFL) form a helical membrane-spanning segment. The Lumenal segment spans residues 159-225 (EKEEEECPGV…NRIKISGYLN (67 aa)). The interval 183 to 205 (SGYPPSKVAGKSQRAEKNSTQCN) is disordered. Residues 226–246 (LLANTIDNFTHGLAVAASFLV) form a helical membrane-spanning segment. Residues 247 to 282 (SRKVGFLTTMAILLHEIPHEVGDFAILLRAGFDRWS) are Cytoplasmic-facing. Residues 261–266 (HEIPHE) carry the XEXPHE-motif motif. The helical transmembrane segment at 283-303 (AAKMQLSTALGGIVGACFAIC) threads the bilayer. The Lumenal portion of the chain corresponds to 304–313 (AQSPKGAGET). Residues 314–334 (VAWILPFTSGGFLYIALVNVV) traverse the membrane as a helical segment. The Cytoplasmic segment spans residues 335–343 (PDLLEEKNP). Residues 344 to 364 (WNSLQQILLLCTGITVMVLLA) traverse the membrane as a helical segment. Over 365–366 (HN) the chain is Lumenal.

The protein belongs to the ZIP transporter (TC 2.A.5) family. In terms of assembly, homodimer.

The protein localises to the golgi apparatus membrane. Its subcellular location is the cytoplasmic vesicle membrane. The protein resides in the endoplasmic reticulum membrane. The catalysed reaction is Zn(2+)(in) = Zn(2+)(out). In terms of biological role, functions as a zinc transporter transporting Zn(2+) from the Golgi apparatus to the cytosol and thus influences the zinc level at least in areas of the cytosol. The sequence is that of Zinc transporter ZIP13 from Gallus gallus (Chicken).